A 342-amino-acid polypeptide reads, in one-letter code: S-adenosylmethionine:tRNA ribosyltransferase-isomerase (342 aa).

The protein belongs to the QueA family. In terms of assembly, monomer.

The protein resides in the cytoplasm. The catalysed reaction is 7-aminomethyl-7-carbaguanosine(34) in tRNA + S-adenosyl-L-methionine = epoxyqueuosine(34) in tRNA + adenine + L-methionine + 2 H(+). Its pathway is tRNA modification; tRNA-queuosine biosynthesis. Its function is as follows. Transfers and isomerizes the ribose moiety from AdoMet to the 7-aminomethyl group of 7-deazaguanine (preQ1-tRNA) to give epoxyqueuosine (oQ-tRNA). The polypeptide is S-adenosylmethionine:tRNA ribosyltransferase-isomerase (Geobacillus sp. (strain WCH70)).